A 206-amino-acid polypeptide reads, in one-letter code: Large ribosomal subunit protein uL4 (206 aa).

The interval Met-63–Glu-97 is disordered. Positions Tyr-64–Ala-77 are enriched in basic residues.

It belongs to the universal ribosomal protein uL4 family. As to quaternary structure, part of the 50S ribosomal subunit.

In terms of biological role, one of the primary rRNA binding proteins, this protein initially binds near the 5'-end of the 23S rRNA. It is important during the early stages of 50S assembly. It makes multiple contacts with different domains of the 23S rRNA in the assembled 50S subunit and ribosome. Its function is as follows. Forms part of the polypeptide exit tunnel. This is Large ribosomal subunit protein uL4 from Rhizobium etli (strain ATCC 51251 / DSM 11541 / JCM 21823 / NBRC 15573 / CFN 42).